Reading from the N-terminus, the 348-residue chain is Flagellar P-ring protein (348 aa).

An N-terminal signal peptide occupies residues 1–24 (MRRKNNNKIWIWVATLILSISALY).

The protein belongs to the FlgI family. As to quaternary structure, the basal body constitutes a major portion of the flagellar organelle and consists of four rings (L,P,S, and M) mounted on a central rod.

Its subcellular location is the periplasm. It localises to the bacterial flagellum basal body. Assembles around the rod to form the L-ring and probably protects the motor/basal body from shearing forces during rotation. This chain is Flagellar P-ring protein, found in Helicobacter hepaticus (strain ATCC 51449 / 3B1).